The sequence spans 341 residues: Glycerol-1-phosphate dehydrogenase [NAD(P)+] (341 aa).

NAD(+) contacts are provided by residues 81-85 (GKAID) and 103-106 (TTAS). Aspartate 108 provides a ligand contact to substrate. An NAD(+)-binding site is contributed by serine 112. Aspartate 151 is a substrate binding site. The Zn(2+) site is built by aspartate 151 and histidine 232. Histidine 236 is a substrate binding site. Histidine 253 contacts Zn(2+).

This sequence belongs to the glycerol-1-phosphate dehydrogenase family. Zn(2+) serves as cofactor.

It localises to the cytoplasm. The catalysed reaction is sn-glycerol 1-phosphate + NAD(+) = dihydroxyacetone phosphate + NADH + H(+). It carries out the reaction sn-glycerol 1-phosphate + NADP(+) = dihydroxyacetone phosphate + NADPH + H(+). Its pathway is membrane lipid metabolism; glycerophospholipid metabolism. Its function is as follows. Catalyzes the NAD(P)H-dependent reduction of dihydroxyacetonephosphate (DHAP or glycerone phosphate) to glycerol 1-phosphate (G1P). The G1P thus generated is used as the glycerophosphate backbone of phospholipids in the cellular membranes of Archaea. The polypeptide is Glycerol-1-phosphate dehydrogenase [NAD(P)+] (Methanococcus aeolicus (strain ATCC BAA-1280 / DSM 17508 / OCM 812 / Nankai-3)).